Here is a 1221-residue protein sequence, read N- to C-terminus: DNA-directed RNA polymerase subunit beta (1221 aa).

The tract at residues 1176 to 1221 is disordered; that stretch reads EKKKLAEEEAEIAAEAEAEGSAEEDAAEADADANEAETADDDKASK. Positions 1183–1215 are enriched in acidic residues; sequence EEAEIAAEAEAEGSAEEDAAEADADANEAETAD.

Belongs to the RNA polymerase beta chain family. The RNAP catalytic core consists of 2 alpha, 1 beta, 1 beta' and 1 omega subunit. When a sigma factor is associated with the core the holoenzyme is formed, which can initiate transcription.

It carries out the reaction RNA(n) + a ribonucleoside 5'-triphosphate = RNA(n+1) + diphosphate. DNA-dependent RNA polymerase catalyzes the transcription of DNA into RNA using the four ribonucleoside triphosphates as substrates. The sequence is that of DNA-directed RNA polymerase subunit beta from Lactobacillus delbrueckii subsp. bulgaricus (strain ATCC BAA-365 / Lb-18).